We begin with the raw amino-acid sequence, 471 residues long: 7-dehydrocholesterol reductase (471 aa).

8 consecutive transmembrane segments (helical) span residues 36–56 (LVSVIFLLLFAPFIVYYFIMA), 95–115 (LYALWVSFQVLLYSWLPDFCH), 144–164 (LQAWLITHFLWFVNAYLLSWF), 173–193 (WIPLLWCANILGYAVSTFAMI), 233–253 (LFFNGRPGIVAWTLINLSFAA), 262–282 (VTNSMILVNVLQAIYVLDFFW), 302–322 (LGWGDCVWLPYLYTLQGLYLV), and 327–347 (QLSTPNALGVLLLGLVGYYIF). Residues K354, R358, L391, W396, and 403–404 (NY) contribute to the NADP(+) site. Residues 416–436 (LACGGGHLLPYFYIIYMTILL) form a helical membrane-spanning segment. NADP(+) contacts are provided by residues D443, 447-451 (CANKY), and Y458.

It belongs to the ERG4/ERG24 family. As to quaternary structure, interacts with DHCR24; this interaction regulates DHCR7 activity. Interacts with TMEM147. In terms of tissue distribution, highest expression is detected in liver, followed by kidney and brain.

It is found in the endoplasmic reticulum membrane. The catalysed reaction is cholesterol + NADP(+) = 7-dehydrocholesterol + NADPH + H(+). It carries out the reaction 7-dehydrodesmosterol + NADPH + H(+) = desmosterol + NADP(+). It catalyses the reaction 5,6alpha-epoxy-5alpha-cholestan-3beta-ol + H2O = 5alpha-cholestane-3beta,5,6beta-triol. The enzyme catalyses 5,6beta-epoxy-5beta-cholestan-3beta-ol + H2O = 5alpha-cholestane-3beta,5,6beta-triol. The protein operates within steroid biosynthesis; cholesterol biosynthesis. Functionally, oxidoreductase that catalyzes the last step of the cholesterol synthesis pathway, which transforms cholesta-5,7-dien-3beta-ol (7-dehydrocholesterol,7-DHC) into cholesterol by reducing the C7-C8 double bond of its sterol core. Can also metabolize cholesta-5,7,24-trien-3beta-ol (7-dehydrodemosterol, 7-DHD) to desmosterol, which is then metabolized by the Delta(24)-sterol reductase (DHCR24) to cholesterol. Modulates ferroptosis (a form of regulated cell death driven by iron-dependent lipid peroxidation) through the metabolic breakdown of the anti-ferroptotic metabolites 7-DHC and 7-DHD which, when accumulated, divert the propagation of peroxyl radical-mediated damage from phospholipid components to its sterol core, protecting plasma and mitochondrial membranes from phospholipid autoxidation. Its function is as follows. Component of the microsomal antiestrogen binding site (AEBS), a multiproteic complex at the ER membrane that consists of an association between cholestenol Delta-isomerase/EBP and DHCR7. This complex is responsible for cholesterol-5,6-epoxide hydrolase (ChEH) activity, which consists in the hydration of cholesterol-5,6-epoxides (5,6-EC) into cholestane-3beta,5alpha,6beta-triol (CT). The precise role of each component of this complex has not been described yet. The protein is 7-dehydrocholesterol reductase (Dhcr7) of Rattus norvegicus (Rat).